A 141-amino-acid polypeptide reads, in one-letter code: ATP synthase epsilon chain (141 aa).

The protein belongs to the ATPase epsilon chain family. As to quaternary structure, F-type ATPases have 2 components, CF(1) - the catalytic core - and CF(0) - the membrane proton channel. CF(1) has five subunits: alpha(3), beta(3), gamma(1), delta(1), epsilon(1). CF(0) has three main subunits: a, b and c.

It localises to the cell membrane. Functionally, produces ATP from ADP in the presence of a proton gradient across the membrane. The polypeptide is ATP synthase epsilon chain (Lactococcus lactis subsp. cremoris (strain MG1363)).